The primary structure comprises 513 residues: ATP synthase subunit alpha (513 aa).

169-176 serves as a coordination point for ATP; it reads GDRQTGKT.

This sequence belongs to the ATPase alpha/beta chains family. F-type ATPases have 2 components, CF(1) - the catalytic core - and CF(0) - the membrane proton channel. CF(1) has five subunits: alpha(3), beta(3), gamma(1), delta(1), epsilon(1). CF(0) has three main subunits: a(1), b(2) and c(9-12). The alpha and beta chains form an alternating ring which encloses part of the gamma chain. CF(1) is attached to CF(0) by a central stalk formed by the gamma and epsilon chains, while a peripheral stalk is formed by the delta and b chains.

It localises to the cell inner membrane. It carries out the reaction ATP + H2O + 4 H(+)(in) = ADP + phosphate + 5 H(+)(out). Its function is as follows. Produces ATP from ADP in the presence of a proton gradient across the membrane. The alpha chain is a regulatory subunit. This is ATP synthase subunit alpha from Actinobacillus pleuropneumoniae serotype 7 (strain AP76).